The chain runs to 211 residues: Large ribosomal subunit protein uL4 (211 aa).

The tract at residues 63–94 is disordered; sequence RFGRQKGGGTARHGARSAPQFVGGGKAHGPRV.

It belongs to the universal ribosomal protein uL4 family. Part of the 50S ribosomal subunit.

Functionally, one of the primary rRNA binding proteins, this protein initially binds near the 5'-end of the 23S rRNA. It is important during the early stages of 50S assembly. It makes multiple contacts with different domains of the 23S rRNA in the assembled 50S subunit and ribosome. Forms part of the polypeptide exit tunnel. The protein is Large ribosomal subunit protein uL4 of Maricaulis maris (strain MCS10) (Caulobacter maris).